A 273-amino-acid polypeptide reads, in one-letter code: Protein FAM210A (273 aa).

Positions 97–106 (SSSATSSGPP) are enriched in low complexity. Residues 97–116 (SSSATSSGPPSEKKEDPDPL) form a disordered region. The span at 107-116 (SEKKEDPDPL) shows a compositional bias: basic and acidic residues. In terms of domain architecture, DUF1279 spans 118 to 230 (DRSISLYQRF…GYMSTPPPVK (113 aa)). Residues 137–157 (VLIPVHLITSAVWFGTFYYAA) form a helical membrane-spanning segment. Residues 230–269 (KEYLQDKMEETKELLTEKMEETKDRLTEKLQETKGKVSLK) are a coiled coil. The disordered stretch occupies residues 247 to 273 (KMEETKDRLTEKLQETKGKVSLKKKVE).

The protein belongs to the FAM210 family. As to quaternary structure, interacts with ATAD3A.

Its subcellular location is the membrane. The protein localises to the mitochondrion. It localises to the cytoplasm. May play a role in the structure and strength of both muscle and bone. In Bos taurus (Bovine), this protein is Protein FAM210A (FAM210A).